A 500-amino-acid polypeptide reads, in one-letter code: Glycerol kinase (500 aa).

Residue Thr13 coordinates ADP. Residues Thr13, Thr14, and Ser15 each contribute to the ATP site. Thr13 lines the sn-glycerol 3-phosphate pocket. Arg17 is an ADP binding site. Arg83, Glu84, Tyr135, and Asp245 together coordinate sn-glycerol 3-phosphate. Arg83, Glu84, Tyr135, Asp245, and Gln246 together coordinate glycerol. Residues Thr267 and Gly310 each coordinate ADP. Residues Thr267, Gly310, Gln314, and Gly411 each coordinate ATP. ADP-binding residues include Gly411 and Asn415.

It belongs to the FGGY kinase family. Homotetramer and homodimer (in equilibrium).

The catalysed reaction is glycerol + ATP = sn-glycerol 3-phosphate + ADP + H(+). It functions in the pathway polyol metabolism; glycerol degradation via glycerol kinase pathway; sn-glycerol 3-phosphate from glycerol: step 1/1. Its activity is regulated as follows. Activated by phosphorylation and inhibited by fructose 1,6-bisphosphate (FBP). In terms of biological role, key enzyme in the regulation of glycerol uptake and metabolism. Catalyzes the phosphorylation of glycerol to yield sn-glycerol 3-phosphate. This is Glycerol kinase from Carboxydothermus hydrogenoformans (strain ATCC BAA-161 / DSM 6008 / Z-2901).